The following is a 493-amino-acid chain: Cobyric acid synthase (493 aa).

The region spanning 255-441 (ELEIAVLRLP…LHGLLENGRW (187 aa)) is the GATase cobBQ-type domain. The active-site Nucleophile is cysteine 336. Histidine 433 is an active-site residue.

The protein belongs to the CobB/CobQ family. CobQ subfamily.

It functions in the pathway cofactor biosynthesis; adenosylcobalamin biosynthesis. Catalyzes amidations at positions B, D, E, and G on adenosylcobyrinic A,C-diamide. NH(2) groups are provided by glutamine, and one molecule of ATP is hydrogenolyzed for each amidation. The protein is Cobyric acid synthase of Synechococcus sp. (strain RCC307).